A 438-amino-acid polypeptide reads, in one-letter code: Argininosuccinate lyase (438 aa).

It belongs to the lyase 1 family. Argininosuccinate lyase subfamily.

The protein resides in the cytoplasm. It catalyses the reaction 2-(N(omega)-L-arginino)succinate = fumarate + L-arginine. It participates in amino-acid biosynthesis; L-arginine biosynthesis; L-arginine from L-ornithine and carbamoyl phosphate: step 3/3. The protein is Argininosuccinate lyase of Clostridium tetani (strain Massachusetts / E88).